The sequence spans 85 residues: Large ribosomal subunit protein bL27 (85 aa).

This sequence belongs to the bacterial ribosomal protein bL27 family.

This chain is Large ribosomal subunit protein bL27, found in Variovorax paradoxus (strain S110).